Consider the following 238-residue polypeptide: Large ribosomal subunit protein uL1 (238 aa).

This sequence belongs to the universal ribosomal protein uL1 family. In terms of assembly, part of the 50S ribosomal subunit.

In terms of biological role, binds directly to 23S rRNA. The L1 stalk is quite mobile in the ribosome, and is involved in E site tRNA release. Protein L1 is also a translational repressor protein, it controls the translation of the L11 operon by binding to its mRNA. This chain is Large ribosomal subunit protein uL1, found in Frankia casuarinae (strain DSM 45818 / CECT 9043 / HFP020203 / CcI3).